Consider the following 143-residue polypeptide: Large ribosomal subunit protein uL11 (143 aa).

Belongs to the universal ribosomal protein uL11 family. Part of the ribosomal stalk of the 50S ribosomal subunit. Interacts with L10 and the large rRNA to form the base of the stalk. L10 forms an elongated spine to which L12 dimers bind in a sequential fashion forming a multimeric L10(L12)X complex. Post-translationally, one or more lysine residues are methylated.

Functionally, forms part of the ribosomal stalk which helps the ribosome interact with GTP-bound translation factors. In Novosphingobium aromaticivorans (strain ATCC 700278 / DSM 12444 / CCUG 56034 / CIP 105152 / NBRC 16084 / F199), this protein is Large ribosomal subunit protein uL11.